The following is a 559-amino-acid chain: PHD finger protein 1 (559 aa).

The 58-residue stretch at 29 to 86 (PRLWEGQDVLARWTDGLLYLGTIKKVDSAREVCLVQFEDDSQFLVLWKDISPAALPGE) folds into the Tudor domain. 2 PHD-type zinc fingers span residues 87–142 (ELLC…CVFA) and 186–240 (QSYC…CRGG). 2 disordered regions span residues 338 to 434 (PVEL…TDAR) and 448 to 526 (HPSA…GGVS). A compositionally biased stretch (basic and acidic residues) spans 369–386 (WRSEPEPLRRRQKGKVEE). 2 stretches are compositionally biased toward polar residues: residues 417-426 (NQSYEGSSGY) and 449-459 (PSASTAGTSGD). Residues 481–515 (SSPHSVTASSSSVPALTPGFSRHSPPSPLCRSLSP) show a composition bias toward low complexity.

It belongs to the Polycomblike family. In terms of assembly, associated component of the PRC2 complex. Interacts with p53/TP53. Interacts with CHMP1. In terms of tissue distribution, testis-specific.

The protein resides in the nucleus. Its subcellular location is the cytoplasm. It is found in the cytoskeleton. The protein localises to the microtubule organizing center. It localises to the centrosome. In terms of biological role, polycomb group (PcG) that specifically binds histone H3 trimethylated at 'Lys-36' (H3K36me3) and recruits the PRC2 complex. Involved in DNA damage response and is recruited at double-strand breaks (DSBs). Acts by binding to H3K36me3, a mark for transcriptional activation, and recruiting the PRC2 complex: it is however unclear whether recruitment of the PRC2 complex to H3K36me3 leads to enhance or inhibit H3K27me3 methylation mediated by the PRC2 complex. According to some reports, PRC2 recruitment by PHF1 promotes H3K27me3 and subsequent gene silencing by inducing spreading of PRC2 and H3K27me3 into H3K36me3 loci. According to other reports, PHF1 recruits the PRC2 complex at double-strand breaks (DSBs) and inhibits the activity of PRC2. Regulates p53/TP53 stability and prolonges its turnover: may act by specifically binding to a methylated from of p53/TP53. This Mus musculus (Mouse) protein is PHD finger protein 1 (Phf1).